The chain runs to 185 residues: Ubiquitin-conjugating enzyme E2 5 (185 aa).

The UBC core domain maps to 1 to 148; that stretch reads MSSPSKRREM…VKEYCEKYAK (148 aa). The active-site Glycyl thioester intermediate is cysteine 85. The disordered stretch occupies residues 146–185; the sequence is YAKPRADTEEMSSDDEMSEDEYASDGDDEDDVAIAGKLDP. Residues 154–177 are compositionally biased toward acidic residues; sequence EEMSSDDEMSEDEYASDGDDEDDV.

The protein belongs to the ubiquitin-conjugating enzyme family. In terms of tissue distribution, expressed in developing ovules, but not in vascular tissues.

It carries out the reaction S-ubiquitinyl-[E1 ubiquitin-activating enzyme]-L-cysteine + [E2 ubiquitin-conjugating enzyme]-L-cysteine = [E1 ubiquitin-activating enzyme]-L-cysteine + S-ubiquitinyl-[E2 ubiquitin-conjugating enzyme]-L-cysteine.. The protein operates within protein modification; protein ubiquitination. Functionally, accepts the ubiquitin from the E1 complex and catalyzes its covalent attachment to other proteins. This is Ubiquitin-conjugating enzyme E2 5 (UBC5) from Arabidopsis thaliana (Mouse-ear cress).